Here is a 143-residue protein sequence, read N- to C-terminus: MNPVRRRKLFILLFALTILSAAAALVLYALRQNISLFYTPTQIVAGEAPVKHHIRVGGMVEANSIVRAKKGLDVQFKITDFENTIVVTYSGILPDLFREGQGIVAEGEVTDNHHFHAIQVLAKHDANYMPPQVKSALADKVKQ.

The Cytoplasmic segment spans residues 1–8; it reads MNPVRRRK. The chain crosses the membrane as a helical; Signal-anchor for type II membrane protein span at residues 9-29; it reads LFILLFALTILSAAAALVLYA. Residues 30-143 lie on the Periplasmic side of the membrane; it reads LRQNISLFYT…KSALADKVKQ (114 aa). Heme contacts are provided by His124 and Tyr128.

This sequence belongs to the CcmE/CycJ family.

Its subcellular location is the cell inner membrane. Heme chaperone required for the biogenesis of c-type cytochromes. Transiently binds heme delivered by CcmC and transfers the heme to apo-cytochromes in a process facilitated by CcmF and CcmH. This is Cytochrome c-type biogenesis protein CcmE from Legionella pneumophila (strain Corby).